Consider the following 578-residue polypeptide: Palmitoyltransferase ZDHHC1 (578 aa).

Over 1–41 (MDVCSKNSNRTAPVSEGGIRRADVPLCSRTNGWSWPPHPFQ) the chain is Cytoplasmic. A helical membrane pass occupies residues 42-62 (FLAWLLYLYFAVTGFGVFVPL). Topologically, residues 63–71 (LPTHWIPAG) are lumenal. Residues 72 to 92 (YICTGITFVCHLFMHLMAVSI) traverse the membrane as a helical segment. Topologically, residues 93-174 (DPADYNVRAK…YWLFLNSVIS (82 aa)) are cytoplasmic. Residues 121 to 173 (ENCHCYLCEVDVGPKSKHCSACNKCVASFDHHCRWLNNCVGSRNYWLFLNSVI) enclose the DHHC domain. The S-palmitoyl cysteine intermediate role is filled by Cys-153. A helical transmembrane segment spans residues 175-195 (ALLGIVLVVVIASYVFIEFFL). Topologically, residues 196-230 (DPSKLRSDKHFQQVRNESVVWFVFLPVAPVTTAGP) are lumenal. A helical transmembrane segment spans residues 231 to 251 (AIPALAGVTIALGLLSALLLG). Topologically, residues 252–578 (HLLCFHIYLM…PSSRVGTSLA (327 aa)) are cytoplasmic. A compositionally biased stretch (basic and acidic residues) spans 278–288 (QEAGDSRKPPP). 4 disordered regions span residues 278 to 298 (QEAG…PKLN), 345 to 376 (HMDE…KRKV), 497 to 517 (SAAG…TAAR), and 532 to 578 (SMFM…TSLA). A compositionally biased stretch (basic residues) spans 363-376 (PHPHKHAQKKKRKV). Over residues 552–561 (AAKRKQTGKK) the composition is skewed to basic residues.

The protein belongs to the DHHC palmitoyltransferase family.

It is found in the endosome membrane. The protein resides in the endoplasmic reticulum membrane. The protein localises to the golgi apparatus. The catalysed reaction is L-cysteinyl-[protein] + hexadecanoyl-CoA = S-hexadecanoyl-L-cysteinyl-[protein] + CoA. Functionally, palmitoyltransferase that catalyzes the addition of palmitate onto various protein substrates, such as ncdn and nlrp3. This chain is Palmitoyltransferase ZDHHC1, found in Danio rerio (Zebrafish).